Consider the following 374-residue polypeptide: Pectate lyase 3 (374 aa).

An N-terminal signal peptide occupies residues 1 to 22 (MKYLLPSAAAGLLLLAAQPTMA). Cysteines 93 and 176 form a disulfide. Positions 150, 152, 187, and 191 each coordinate Ca(2+). Residue Arg-239 is part of the active site. Residues Cys-350 and Cys-373 are joined by a disulfide bond.

The protein belongs to the polysaccharide lyase 1 family. PLADES subfamily. The cofactor is Ca(2+).

Its subcellular location is the secreted. It catalyses the reaction Eliminative cleavage of (1-&gt;4)-alpha-D-galacturonan to give oligosaccharides with 4-deoxy-alpha-D-galact-4-enuronosyl groups at their non-reducing ends.. The protein operates within glycan metabolism; pectin degradation; 2-dehydro-3-deoxy-D-gluconate from pectin: step 2/5. Functionally, involved in maceration and soft-rotting of plant tissue. The sequence is that of Pectate lyase 3 (pel3) from Pectobacterium carotovorum subsp. carotovorum (Erwinia carotovora subsp. carotovora).